Reading from the N-terminus, the 295-residue chain is Protoheme IX farnesyltransferase (295 aa).

9 consecutive transmembrane segments (helical) span residues 27–47, 48–68, 93–115, 119–136, 147–167, 175–195, 219–239, 247–267, and 275–295; these read IMYLVVLTGITGMIIAPGNIH, PFIGIISTLCIALGSGAAGAI, IARSTAIELGLVLSVISVTVMMI, YLSGILLAISIGFYSLVY, NIVIGGIAGALPPIIGWTSVT, LILFLIIFVWTPPHFWALSLL, IYILVYSIILFIITLLPGIFL, TCAIPLGMTFVFHAFKVFVSI, and MFTYSIAYLFILFICIIISSF.

Belongs to the UbiA prenyltransferase family. Protoheme IX farnesyltransferase subfamily.

Its subcellular location is the cell inner membrane. The catalysed reaction is heme b + (2E,6E)-farnesyl diphosphate + H2O = Fe(II)-heme o + diphosphate. The protein operates within porphyrin-containing compound metabolism; heme O biosynthesis; heme O from protoheme: step 1/1. Its function is as follows. Converts heme B (protoheme IX) to heme O by substitution of the vinyl group on carbon 2 of heme B porphyrin ring with a hydroxyethyl farnesyl side group. In Ehrlichia chaffeensis (strain ATCC CRL-10679 / Arkansas), this protein is Protoheme IX farnesyltransferase.